Reading from the N-terminus, the 613-residue chain is DNA mismatch repair protein MutL (613 aa).

The protein belongs to the DNA mismatch repair MutL/HexB family.

This protein is involved in the repair of mismatches in DNA. It is required for dam-dependent methyl-directed DNA mismatch repair. May act as a 'molecular matchmaker', a protein that promotes the formation of a stable complex between two or more DNA-binding proteins in an ATP-dependent manner without itself being part of a final effector complex. The protein is DNA mismatch repair protein MutL of Bradyrhizobium sp. (strain ORS 278).